Reading from the N-terminus, the 203-residue chain is Superoxide dismutase [Mn] (203 aa).

Mn(2+) is bound by residues histidine 31, histidine 79, aspartate 161, and histidine 165.

The protein belongs to the iron/manganese superoxide dismutase family. The cofactor is Mn(2+).

It carries out the reaction 2 superoxide + 2 H(+) = H2O2 + O2. Destroys superoxide anion radicals which are normally produced within the cells and which are toxic to biological systems. This chain is Superoxide dismutase [Mn] (sod), found in Haloarcula marismortui (strain ATCC 43049 / DSM 3752 / JCM 8966 / VKM B-1809) (Halobacterium marismortui).